Consider the following 216-residue polypeptide: Adenylate kinase (216 aa).

10-15 contributes to the ATP binding site; it reads GAGKGT. The interval 30 to 59 is NMP; the sequence is STGDIFRKNISEKTPLGVKAKEYMDKGQLV. AMP-binding positions include threonine 31, arginine 36, 57–59, 85–88, and glutamine 92; these read QLV and GFPR. Positions 126–163 are LID; sequence GRRVCPSCGASYHIKFNPPKIEGLCDVCKKEVIQRKDD. Arginine 127 contributes to the ATP binding site. Residues cysteine 130 and cysteine 133 each contribute to the Zn(2+) site. Position 136–137 (136–137) interacts with ATP; that stretch reads SY. Zn(2+) is bound by residues cysteine 150 and cysteine 153. AMP contacts are provided by arginine 160 and arginine 171. Glutamine 199 contributes to the ATP binding site.

The protein belongs to the adenylate kinase family. In terms of assembly, monomer.

It localises to the cytoplasm. The enzyme catalyses AMP + ATP = 2 ADP. The protein operates within purine metabolism; AMP biosynthesis via salvage pathway; AMP from ADP: step 1/1. Catalyzes the reversible transfer of the terminal phosphate group between ATP and AMP. Plays an important role in cellular energy homeostasis and in adenine nucleotide metabolism. The polypeptide is Adenylate kinase (Clostridium novyi (strain NT)).